Reading from the N-terminus, the 301-residue chain is uncharacterized protein (301 aa).

One can recognise an FHA domain in the interval 27–85 (YKIGRHTNKSTSPSPSNLFFNSKVLSRQHAELWLDKDTLSVYIRDVKSSNGTFVNETRL). Residues 187-236 (TGKTRDNRNNHHYSRKSSPHISSLAVPSTKHLDGERDRNLKRSTSPLSSS) are disordered. Serine 204 bears the Phosphoserine mark. Basic and acidic residues predominate over residues 216 to 226 (KHLDGERDRNL). A Phosphoserine modification is found at serine 231.

As to quaternary structure, interacts with sad1.

The protein localises to the nucleus. This is an uncharacterized protein from Schizosaccharomyces pombe (strain 972 / ATCC 24843) (Fission yeast).